A 91-amino-acid chain; its full sequence is Elongation factor 1-beta (91 aa).

It belongs to the EF-1-beta/EF-1-delta family.

Its function is as follows. Promotes the exchange of GDP for GTP in EF-1-alpha/GDP, thus allowing the regeneration of EF-1-alpha/GTP that could then be used to form the ternary complex EF-1-alpha/GTP/AAtRNA. The sequence is that of Elongation factor 1-beta from Saccharolobus islandicus (strain Y.N.15.51 / Yellowstone #2) (Sulfolobus islandicus).